The sequence spans 373 residues: GDSL esterase/lipase LIP-4 (373 aa).

The first 32 residues, 1 to 32 (MATLFLYSNTFSFFFITLVSLALLILRQPSRA), serve as a signal peptide directing secretion. The Nucleophile role is filled by Ser-47. Residue Asn-93 is glycosylated (N-linked (GlcNAc...) asparagine). Active-site residues include Asp-339 and His-342.

Belongs to the 'GDSL' lipolytic enzyme family.

It localises to the secreted. This is GDSL esterase/lipase LIP-4 (LIP4) from Arabidopsis thaliana (Mouse-ear cress).